The sequence spans 471 residues: Secretogranin-3 (471 aa).

Positions 1-22 are cleaved as a signal peptide; the sequence is MGFLWTGTWIVVLMLHSSPIQA. Disordered regions lie at residues 23–72 and 86–105; these read FPKP…ESNY and EKEK…NDNK. The segment covering 32–45 has biased composition (basic and acidic residues); the sequence is KPLHNRELSAERPL. Ser-40 carries the phosphoserine modification. O-linked (Xyl...) (chondroitin sulfate) serine glycosylation occurs at Ser-40. Asn-71 is a glycosylation site (N-linked (GlcNAc...) asparagine). Over residues 86-96 the composition is skewed to basic and acidic residues; it reads EKEKNEKERQS. Residue Asn-353 is glycosylated (N-linked (GlcNAc...) asparagine). The disordered stretch occupies residues 357 to 409; the sequence is LFAVPSEKSHEETDSTKEEAAKMEKEYGTLKDSTKDDDSNPRGKTDEHKGKTE. Residues 363-409 show a composition bias toward basic and acidic residues; that stretch reads EKSHEETDSTKEEAAKMEKEYGTLKDSTKDDDSNPRGKTDEHKGKTE. Position 365 is a phosphoserine (Ser-365).

As to quaternary structure, interacts with CHGA. Interacts with secretogranin II/SCG2. Interacts (via C-terminus) with CPE.

The protein resides in the cytoplasmic vesicle. It localises to the secretory vesicle. Its subcellular location is the secretory vesicle membrane. The protein localises to the secreted. Its function is as follows. Member of the granin protein family that regulates the biogenesis of secretory granules. Acts as a sorting receptor for intragranular proteins including chromogranin A/CHGA. May also play a role in angiogenesis. Promotes endothelial proliferation, migration and tube formation through MEK/ERK signaling pathway. The protein is Secretogranin-3 (SCG3) of Bos taurus (Bovine).